Consider the following 144-residue polypeptide: Small ribosomal subunit protein eS17 (144 aa).

The protein belongs to the eukaryotic ribosomal protein eS17 family.

The sequence is that of Small ribosomal subunit protein eS17 (RPS17) from Solanum lycopersicum (Tomato).